The chain runs to 380 residues: O-phospho-L-seryl-tRNA:Cys-tRNA synthase (380 aa).

Pyridoxal 5'-phosphate-binding positions include 86–87, asparagine 192, and 215–217; these read AR and SGH. An N6-(pyridoxal phosphate)lysine modification is found at lysine 218.

The protein belongs to the SepCysS family. Homodimer. Interacts with SepRS. The cofactor is pyridoxal 5'-phosphate.

It carries out the reaction O-phospho-L-seryl-tRNA(Cys) + hydrogen sulfide + H(+) = L-cysteinyl-tRNA(Cys) + phosphate. Functionally, converts O-phospho-L-seryl-tRNA(Cys) (Sep-tRNA(Cys)) to L-cysteinyl-tRNA(Cys) (Cys-tRNA(Cys)). The sequence is that of O-phospho-L-seryl-tRNA:Cys-tRNA synthase from Methanococcus maripaludis (strain C6 / ATCC BAA-1332).